The sequence spans 375 residues: Eukaryotic translation initiation factor 3 subunit F (375 aa).

In terms of domain architecture, MPN spans 30-166 (VVIQPQALFS…TRAYISAPVG (137 aa)). A disordered region spans residues 307–375 (LGGESGSGES…EAQNGKEEKK (69 aa)). Gly residues predominate over residues 323–332 (QRGGKGGRGG). Composition is skewed to basic and acidic residues over residues 336–345 (TQERSGEEAR) and 358–375 (RSYEERTNEAQNGKEEKK).

This sequence belongs to the eIF-3 subunit F family. Component of the eukaryotic translation initiation factor 3 (eIF-3) complex.

The protein resides in the cytoplasm. Functionally, component of the eukaryotic translation initiation factor 3 (eIF-3) complex, which is involved in protein synthesis of a specialized repertoire of mRNAs and, together with other initiation factors, stimulates binding of mRNA and methionyl-tRNAi to the 40S ribosome. The eIF-3 complex specifically targets and initiates translation of a subset of mRNAs involved in cell proliferation. The sequence is that of Eukaryotic translation initiation factor 3 subunit F from Aspergillus niger (strain ATCC MYA-4892 / CBS 513.88 / FGSC A1513).